Here is a 521-residue protein sequence, read N- to C-terminus: D-aminoacyl-tRNA deacylase (521 aa).

Disordered stretches follow at residues 323–353 (AVGTVHTKDSTDIDTGTNHNVDAERTESEDS) and 499–521 (VFSTSSSSSSSSSSSSSSSSSSS). The span at 343–353 (VDAERTESEDS) shows a compositional bias: basic and acidic residues. Over residues 501-521 (STSSSSSSSSSSSSSSSSSSS) the composition is skewed to low complexity.

It belongs to the DtdA deacylase family. In terms of assembly, monomer. Requires Zn(2+) as cofactor.

The catalysed reaction is a D-aminoacyl-tRNA + H2O = a tRNA + a D-alpha-amino acid + H(+). It carries out the reaction glycyl-tRNA(Ala) + H2O = tRNA(Ala) + glycine + H(+). D-aminoacyl-tRNA deacylase with broad substrate specificity. By recycling D-aminoacyl-tRNA to D-amino acids and free tRNA molecules, this enzyme counteracts the toxicity associated with the formation of D-aminoacyl-tRNA entities in vivo. The chain is D-aminoacyl-tRNA deacylase from Haloquadratum walsbyi (strain DSM 16790 / HBSQ001).